The chain runs to 84 residues: Defensin-like protein 199 (84 aa).

The N-terminal stretch at 1 to 24 is a signal peptide; the sequence is MAITMRTLVAFVFTIFFIISFVHS. 4 cysteine pairs are disulfide-bonded: cysteine 40/cysteine 80, cysteine 47/cysteine 72, cysteine 56/cysteine 78, and cysteine 60/cysteine 79.

Belongs to the DEFL family.

The protein resides in the secreted. In Arabidopsis thaliana (Mouse-ear cress), this protein is Defensin-like protein 199.